Consider the following 320-residue polypeptide: Lipoyl synthase (320 aa).

7 residues coordinate [4Fe-4S] cluster: C67, C72, C78, C93, C97, C100, and S307. Positions F79–E296 constitute a Radical SAM core domain.

It belongs to the radical SAM superfamily. Lipoyl synthase family. [4Fe-4S] cluster serves as cofactor.

Its subcellular location is the cytoplasm. The catalysed reaction is [[Fe-S] cluster scaffold protein carrying a second [4Fe-4S](2+) cluster] + N(6)-octanoyl-L-lysyl-[protein] + 2 oxidized [2Fe-2S]-[ferredoxin] + 2 S-adenosyl-L-methionine + 4 H(+) = [[Fe-S] cluster scaffold protein] + N(6)-[(R)-dihydrolipoyl]-L-lysyl-[protein] + 4 Fe(3+) + 2 hydrogen sulfide + 2 5'-deoxyadenosine + 2 L-methionine + 2 reduced [2Fe-2S]-[ferredoxin]. It functions in the pathway protein modification; protein lipoylation via endogenous pathway; protein N(6)-(lipoyl)lysine from octanoyl-[acyl-carrier-protein]: step 2/2. In terms of biological role, catalyzes the radical-mediated insertion of two sulfur atoms into the C-6 and C-8 positions of the octanoyl moiety bound to the lipoyl domains of lipoate-dependent enzymes, thereby converting the octanoylated domains into lipoylated derivatives. The chain is Lipoyl synthase from Haemophilus influenzae (strain 86-028NP).